A 488-amino-acid chain; its full sequence is Probable malate:quinone oxidoreductase (488 aa).

This sequence belongs to the MQO family. FAD serves as cofactor.

It catalyses the reaction (S)-malate + a quinone = a quinol + oxaloacetate. It functions in the pathway carbohydrate metabolism; tricarboxylic acid cycle; oxaloacetate from (S)-malate (quinone route): step 1/1. This Neisseria meningitidis serogroup B (strain ATCC BAA-335 / MC58) protein is Probable malate:quinone oxidoreductase.